We begin with the raw amino-acid sequence, 71 residues long: Large ribosomal subunit protein bL31 (71 aa).

4 residues coordinate Zn(2+): Cys16, Cys18, Cys37, and Cys40.

It belongs to the bacterial ribosomal protein bL31 family. Type A subfamily. As to quaternary structure, part of the 50S ribosomal subunit. Zn(2+) is required as a cofactor.

In terms of biological role, binds the 23S rRNA. The chain is Large ribosomal subunit protein bL31 from Sodalis glossinidius (strain morsitans).